The chain runs to 431 residues: Serine/threonine-protein kinase Sgk1 (431 aa).

The tract at residues Met-1 to Ile-60 is necessary for localization to the mitochondria. The tract at residues Pro-66–His-92 is disordered. Ser-74 carries the post-translational modification Phosphoserine. A Phosphoserine; by MAPK7 modification is found at Ser-78. The span at Gln-81–Pro-91 shows a compositional bias: polar residues. Residues Phe-98–Phe-355 enclose the Protein kinase domain. Residues Ile-104 to Val-112 and Lys-127 contribute to the ATP site. The Nuclear localization signal signature appears at Lys-131–Lys-141. Asp-222 serves as the catalytic Proton acceptor. Position 256 is a phosphothreonine; by PDPK1 (Thr-256). The region spanning Ser-356–Leu-431 is the AGC-kinase C-terminal domain. Thr-369 carries the phosphothreonine; by PKA modification. A phosphoserine mark is found at Ser-397, Ser-401, and Ser-422.

This sequence belongs to the protein kinase superfamily. AGC Ser/Thr protein kinase family. As to quaternary structure, homodimer; disulfide-linked. Forms a trimeric complex with FBXW7 and NOTCH1. Interacts with MAPK3/ERK1, MAPK1/ERK2, MAP2K1/MEK1, MAP2K2/MEK2, NEDD4, NEDD4L, MAPT/TAU, MAPK7, CREB1, SLC9A3R2/NHERF2 and KCNJ1/ROMK1. Associates with the mammalian target of rapamycin complex 2 (mTORC2) via an interaction with MAPKAP1/SIN1. In terms of processing, regulated by phosphorylation. Activated by phosphorylation on Ser-422 by mTORC2, transforming it into a substrate for PDPK1 which phosphorylates it on Thr-256. Phosphorylation on Ser-397 and Ser-401 are also essential for its activity. Phosphorylation on Ser-78 by MAPK7 is required for growth factor-induced cell cycle progression. Post-translationally, ubiquitinated by NEDD4L; which promotes proteasomal degradation. Ubiquitinated by SYVN1 at the endoplasmic reticulum; which promotes rapid proteasomal degradation and maintains a high turnover rate in resting cells. Isoform 2 shows enhanced stability. Expressed in most tissues with highest levels in the pancreas, followed by placenta, kidney and lung. Isoform 2 is strongly expressed in brain and pancreas, weaker in heart, placenta, lung, liver and skeletal muscle.

The protein resides in the cytoplasm. It is found in the nucleus. It localises to the endoplasmic reticulum membrane. Its subcellular location is the cell membrane. The protein localises to the mitochondrion. It catalyses the reaction L-seryl-[protein] + ATP = O-phospho-L-seryl-[protein] + ADP + H(+). The catalysed reaction is L-threonyl-[protein] + ATP = O-phospho-L-threonyl-[protein] + ADP + H(+). Two specific sites, one in the kinase domain (Thr-256) and the other in the C-terminal regulatory region (Ser-422), need to be phosphorylated for its full activation. Phosphorylation at Ser-397 and Ser-401 are also essential for its activity. Activated by WNK1, WNK2, WNK3 and WNK4; which promote phosphorylation by mTORC2. Serine/threonine-protein kinase which is involved in the regulation of a wide variety of ion channels, membrane transporters, cellular enzymes, transcription factors, neuronal excitability, cell growth, proliferation, survival, migration and apoptosis. Plays an important role in cellular stress response. Contributes to regulation of renal Na(+) retention, renal K(+) elimination, salt appetite, gastric acid secretion, intestinal Na(+)/H(+) exchange and nutrient transport, insulin-dependent salt sensitivity of blood pressure, salt sensitivity of peripheral glucose uptake, cardiac repolarization and memory consolidation. Up-regulates Na(+) channels: SCNN1A/ENAC, SCN5A and ASIC1/ACCN2, K(+) channels: KCNJ1/ROMK1, KCNA1-5, KCNQ1-5 and KCNE1, epithelial Ca(2+) channels: TRPV5 and TRPV6, chloride channels: BSND, CLCN2 and CFTR, glutamate transporters: SLC1A3/EAAT1, SLC1A2 /EAAT2, SLC1A1/EAAT3, SLC1A6/EAAT4 and SLC1A7/EAAT5, amino acid transporters: SLC1A5/ASCT2, SLC38A1/SN1 and SLC6A19, creatine transporter: SLC6A8, Na(+)/dicarboxylate cotransporter: SLC13A2/NADC1, Na(+)-dependent phosphate cotransporter: SLC34A2/NAPI-2B, glutamate receptor: GRIK2/GLUR6. Up-regulates carriers: SLC9A3/NHE3, SLC12A1/NKCC2, SLC12A3/NCC, SLC5A3/SMIT, SLC2A1/GLUT1, SLC5A1/SGLT1 and SLC15A2/PEPT2. Regulates enzymes: GSK3A/B, PMM2 and Na(+)/K(+) ATPase, and transcription factors: CTNNB1 and nuclear factor NF-kappa-B. Stimulates sodium transport into epithelial cells by enhancing the stability and expression of SCNN1A/ENAC. This is achieved by phosphorylating the NEDD4L ubiquitin E3 ligase, promoting its interaction with 14-3-3 proteins, thereby preventing it from binding to SCNN1A/ENAC and targeting it for degradation. Regulates store-operated Ca(+2) entry (SOCE) by stimulating ORAI1 and STIM1. Regulates KCNJ1/ROMK1 directly via its phosphorylation or indirectly via increased interaction with SLC9A3R2/NHERF2. Phosphorylates MDM2 and activates MDM2-dependent ubiquitination of p53/TP53. Phosphorylates MAPT/TAU and mediates microtubule depolymerization and neurite formation in hippocampal neurons. Phosphorylates SLC2A4/GLUT4 and up-regulates its activity. Phosphorylates APBB1/FE65 and promotes its localization to the nucleus. Phosphorylates MAPK1/ERK2 and activates it by enhancing its interaction with MAP2K1/MEK1 and MAP2K2/MEK2. Phosphorylates FBXW7 and plays an inhibitory role in the NOTCH1 signaling. Phosphorylates FOXO1 resulting in its relocalization from the nucleus to the cytoplasm. Phosphorylates FOXO3, promoting its exit from the nucleus and interference with FOXO3-dependent transcription. Phosphorylates BRAF and MAP3K3/MEKK3 and inhibits their activity. Phosphorylates SLC9A3/NHE3 in response to dexamethasone, resulting in its activation and increased localization at the cell membrane. Phosphorylates CREB1. Necessary for vascular remodeling during angiogenesis. Sustained high levels and activity may contribute to conditions such as hypertension and diabetic nephropathy. Isoform 2 exhibited a greater effect on cell plasma membrane expression of SCNN1A/ENAC and Na(+) transport than isoform 1. The polypeptide is Serine/threonine-protein kinase Sgk1 (SGK1) (Homo sapiens (Human)).